A 667-amino-acid polypeptide reads, in one-letter code: DNA ligase (667 aa).

NAD(+) is bound by residues 32–36, 81–82, and glutamate 110; these read DSEYD and SL. The active-site N6-AMP-lysine intermediate is lysine 112. NAD(+)-binding residues include arginine 133, glutamate 167, lysine 283, and lysine 307. Zn(2+) contacts are provided by cysteine 401, cysteine 404, cysteine 419, and cysteine 424. A BRCT domain is found at 586–667; it reads EGHPEFSGKT…FVDKQNELNS (82 aa).

Belongs to the NAD-dependent DNA ligase family. LigA subfamily. Mg(2+) is required as a cofactor. It depends on Mn(2+) as a cofactor.

It catalyses the reaction NAD(+) + (deoxyribonucleotide)n-3'-hydroxyl + 5'-phospho-(deoxyribonucleotide)m = (deoxyribonucleotide)n+m + AMP + beta-nicotinamide D-nucleotide.. Its function is as follows. DNA ligase that catalyzes the formation of phosphodiester linkages between 5'-phosphoryl and 3'-hydroxyl groups in double-stranded DNA using NAD as a coenzyme and as the energy source for the reaction. It is essential for DNA replication and repair of damaged DNA. This Staphylococcus aureus (strain COL) protein is DNA ligase.